A 268-amino-acid polypeptide reads, in one-letter code: Myb-related protein 315 (268 aa).

HTH myb-type domains are found at residues 9-61 (KFGL…MNYL) and 62-116 (RPDL…KKKL). 2 DNA-binding regions (H-T-H motif) span residues 37–61 (WRVI…MNYL) and 89–112 (WSKI…NTHI).

Expressed in roots, stems, leaves, seed pods and flowers. Strongest expression in the stem.

The protein resides in the nucleus. Functionally, transcription factor. The protein is Myb-related protein 315 of Antirrhinum majus (Garden snapdragon).